The chain runs to 768 residues: Eukaryotic elongation factor 2 kinase (768 aa).

Residues 1-17 (MTIDTTNESDNSPTNSP) are compositionally biased toward polar residues. A disordered region spans residues 1–21 (MTIDTTNESDNSPTNSPGLEA). Residues 102 to 309 (RYSAIRKQWT…ICETMDLSNF (208 aa)) enclose the Alpha-type protein kinase domain. 279-284 (GDGNLG) serves as a coordination point for ATP. Positions 402-411 (SEDEEDEEED) are enriched in acidic residues. The tract at residues 402–446 (SEDEEDEEEDYPRSEKSGNSQKSRRSRMSISTRSSGDESASRPRK) is disordered.

The protein belongs to the protein kinase superfamily. Alpha-type protein kinase family. In terms of assembly, monomer or homodimer. Interacts with cmd-1 in the presence of Ca(2+).

The catalysed reaction is [translation elongation factor 2] + ATP = [translation elongation factor 2]-phosphate + ADP + H(+). With respect to regulation, calcium(2+)/calmodulin dependent activity. Undergoes calcium/calmodulin-dependent intramolecular autophosphorylation, and this results in it becoming partially calcium/calmodulin-independent. In terms of biological role, phosphorylates elongation factor-2 (eEF-2) at two threonine residues that are conserved in all eukaryotes and are located within a GTP-binding domain. Calcium(2+)/calmodulin dependent activity. Inactivates eEF-2 by catalyzing its phosphorylation. eEF-2 catalyzes the movement of the ribosome along mRNA during translation in eukaryotic cells. This is Eukaryotic elongation factor 2 kinase (efk-1) from Caenorhabditis elegans.